The sequence spans 102 residues: Small ribosomal subunit protein uS10 (102 aa).

This sequence belongs to the universal ribosomal protein uS10 family. In terms of assembly, part of the 30S ribosomal subunit.

Involved in the binding of tRNA to the ribosomes. In Thermococcus gammatolerans (strain DSM 15229 / JCM 11827 / EJ3), this protein is Small ribosomal subunit protein uS10.